A 195-amino-acid polypeptide reads, in one-letter code: HTH-type transcriptional regulator TtmR (195 aa).

Positions 47 to 177 constitute an HTH marR-type domain; the sequence is DSQLCFAVYA…LLDNLASMRD (131 aa). The segment at residues 93–116 is a DNA-binding region (H-T-H motif); it reads VKEIGSRLFLDSGTLTPLLKRLEA.

Its subcellular location is the cytoplasm. Its function is as follows. Formaldehyde-responsive transcription factor that modulates resistance to stress induced by formaldehyde. Impacts the expression of a number of genes encoding transcription factors and/or involved in stress response, including efgA, and which probably collectively trigger a formaldehyde-specific physiological response. Required for optimal transition to methylotrophy. Not involved in a general stress response. This is HTH-type transcriptional regulator TtmR from Methylorubrum extorquens (strain PA1) (Methylobacterium extorquens).